The primary structure comprises 718 residues: Catalase-peroxidase (718 aa).

The tryptophyl-tyrosyl-methioninium (Trp-Tyr) (with M-245) cross-link spans 98–219 (WHAAGTYRMG…LAATEMGLIY (122 aa)). His99 functions as the Proton acceptor in the catalytic mechanism. A cross-link (tryptophyl-tyrosyl-methioninium (Tyr-Met) (with W-98)) is located at residues 219 to 245 (YVNPEGPQASGDPRSAAPFIRATFGNM). Residue His260 coordinates heme b.

This sequence belongs to the peroxidase family. Peroxidase/catalase subfamily. Homodimer or homotetramer. Requires heme b as cofactor. Post-translationally, formation of the three residue Trp-Tyr-Met cross-link is important for the catalase, but not the peroxidase activity of the enzyme.

It carries out the reaction H2O2 + AH2 = A + 2 H2O. The enzyme catalyses 2 H2O2 = O2 + 2 H2O. Bifunctional enzyme with both catalase and broad-spectrum peroxidase activity. The polypeptide is Catalase-peroxidase (Acinetobacter baumannii (strain ACICU)).